Here is a 400-residue protein sequence, read N- to C-terminus: Acetate kinase (400 aa).

Asn10 lines the Mg(2+) pocket. An ATP-binding site is contributed by Lys17. Arg91 contacts substrate. The active-site Proton donor/acceptor is the Asp150. ATP contacts are provided by residues 210–214 (HLGGG), 285–287 (DFR), and 333–337 (GIGEN). Position 387 (Glu387) interacts with Mg(2+).

It belongs to the acetokinase family. As to quaternary structure, homodimer. It depends on Mg(2+) as a cofactor. Mn(2+) serves as cofactor.

The protein resides in the cytoplasm. The catalysed reaction is acetate + ATP = acetyl phosphate + ADP. Its pathway is metabolic intermediate biosynthesis; acetyl-CoA biosynthesis; acetyl-CoA from acetate: step 1/2. Its function is as follows. Catalyzes the formation of acetyl phosphate from acetate and ATP. Can also catalyze the reverse reaction. The polypeptide is Acetate kinase (Buchnera aphidicola subsp. Baizongia pistaciae (strain Bp)).